We begin with the raw amino-acid sequence, 353 residues long: Photosystem II protein D1 (353 aa).

An N-acetylthreonine modification is found at T2. A Phosphothreonine modification is found at T2. The next 3 membrane-spanning stretches (helical) occupy residues 29 to 46 (YIGW…TATS), 118 to 133 (HFLL…EWEL), and 142 to 156 (WIAV…AATA). H118 contributes to the chlorophyll a binding site. Y126 is a pheophytin a binding site. 2 residues coordinate [CaMn4O5] cluster: D170 and E189. Residues 197-218 (FHMLGVAGVFGGSLFSAMHGSL) traverse the membrane as a helical segment. H198 lines the chlorophyll a pocket. A quinone-binding positions include H215 and 264–265 (SF). Residue H215 coordinates Fe cation. Residue H272 participates in Fe cation binding. Residues 274-288 (FLAAWPVVGIWFTSL) form a helical membrane-spanning segment. Positions 332, 333, 342, and 344 each coordinate [CaMn4O5] cluster. A propeptide spanning residues 345–353 (AIDAPSVNG) is cleaved from the precursor.

Belongs to the reaction center PufL/M/PsbA/D family. As to quaternary structure, PSII is composed of 1 copy each of membrane proteins PsbA, PsbB, PsbC, PsbD, PsbE, PsbF, PsbH, PsbI, PsbJ, PsbK, PsbL, PsbM, PsbT, PsbX, PsbY, PsbZ, Psb30/Ycf12, at least 3 peripheral proteins of the oxygen-evolving complex and a large number of cofactors. It forms dimeric complexes. The cofactor is The D1/D2 heterodimer binds P680, chlorophylls that are the primary electron donor of PSII, and subsequent electron acceptors. It shares a non-heme iron and each subunit binds pheophytin, quinone, additional chlorophylls, carotenoids and lipids. D1 provides most of the ligands for the Mn4-Ca-O5 cluster of the oxygen-evolving complex (OEC). There is also a Cl(-1) ion associated with D1 and D2, which is required for oxygen evolution. The PSII complex binds additional chlorophylls, carotenoids and specific lipids.. In terms of processing, tyr-161 forms a radical intermediate that is referred to as redox-active TyrZ, YZ or Y-Z. C-terminally processed by CTPA; processing is essential to allow assembly of the oxygen-evolving complex and thus photosynthetic growth.

The protein localises to the plastid. Its subcellular location is the chloroplast thylakoid membrane. The enzyme catalyses 2 a plastoquinone + 4 hnu + 2 H2O = 2 a plastoquinol + O2. Photosystem II (PSII) is a light-driven water:plastoquinone oxidoreductase that uses light energy to abstract electrons from H(2)O, generating O(2) and a proton gradient subsequently used for ATP formation. It consists of a core antenna complex that captures photons, and an electron transfer chain that converts photonic excitation into a charge separation. The D1/D2 (PsbA/PsbD) reaction center heterodimer binds P680, the primary electron donor of PSII as well as several subsequent electron acceptors. The protein is Photosystem II protein D1 of Coffea arabica (Arabian coffee).